A 475-amino-acid chain; its full sequence is MQETTVKRDGASPSDAGTPATTAQGLGKLYIRTFGCQMNEYDSDKMADVLRADQGLELTDNPEDADVILFNTCSVREKAQEKVFSDLGRVQHLKKQNPNLVIGVGGCVASQEGEAIVKRAPYVDVVFGPQTLHRLPDLIKRRRAQGVSQVDISFPEIEKFDALPPPRVDGATAFVSIMEGCSKYCSFCVVPYTRGEEVSRPFDDVLLEIADLADQGVKEVTLLGQNVNAYRGAMGDSGEIADFAMLLEYVHEIPGIERIRYTTSHPKEMTQRMVDAYARLPKLVSFLHLPVQAGSDRVLAAMKRGYTALEFKSVVRRLRAARPSLTLSSDFIVGFPGETEEDFQKTMKLIEDVGFDTSFSFVYSRRPGTPAADLHDDTPQDVKLRRLQQLQALINQQAAAIAQGMIGTRQRVLVEGPSRRDPNELMGRTENNRIVNFPGVPRLIGHMVDVVVTHAHTNSLRGRVAGIERDTSGAE.

A compositionally biased stretch (basic and acidic residues) spans 1 to 10; sequence MQETTVKRDG. Positions 1–22 are disordered; that stretch reads MQETTVKRDGASPSDAGTPATT. The MTTase N-terminal domain maps to 27–144; that stretch reads GKLYIRTFGC…LPDLIKRRRA (118 aa). [4Fe-4S] cluster is bound by residues Cys36, Cys73, Cys107, Cys181, Cys185, and Cys188. A Radical SAM core domain is found at 167–400; it reads RVDGATAFVS…QALINQQAAA (234 aa). One can recognise a TRAM domain in the interval 403 to 466; the sequence is QGMIGTRQRV…TNSLRGRVAG (64 aa).

It belongs to the methylthiotransferase family. MiaB subfamily. As to quaternary structure, monomer. [4Fe-4S] cluster serves as cofactor.

The protein localises to the cytoplasm. It catalyses the reaction N(6)-dimethylallyladenosine(37) in tRNA + (sulfur carrier)-SH + AH2 + 2 S-adenosyl-L-methionine = 2-methylsulfanyl-N(6)-dimethylallyladenosine(37) in tRNA + (sulfur carrier)-H + 5'-deoxyadenosine + L-methionine + A + S-adenosyl-L-homocysteine + 2 H(+). Functionally, catalyzes the methylthiolation of N6-(dimethylallyl)adenosine (i(6)A), leading to the formation of 2-methylthio-N6-(dimethylallyl)adenosine (ms(2)i(6)A) at position 37 in tRNAs that read codons beginning with uridine. The sequence is that of tRNA-2-methylthio-N(6)-dimethylallyladenosine synthase from Bordetella parapertussis (strain 12822 / ATCC BAA-587 / NCTC 13253).